The chain runs to 222 residues: MVTFFENELSAKKRNQRRGFLFILSSPSGAGKSTLSRLLLKDGKLELSISMTTRQKRPSEVDGLHYHFISKKEFKRKRDGNEFIEWAEVHGNYYGTLRESVENVLSTGRDMLFDIDYQGTKQLQKKMPGDTVSVFILPPSMKELISRLYRRAEDSQDIINLRLKNARTEMQHWRSYDYVIINENLNQSVSLIKSIYLAETVKRERCFFLEPFINGLIAEKID.

The Guanylate kinase-like domain occupies glycine 19–leucine 197. Serine 26 to serine 33 is an ATP binding site.

Belongs to the guanylate kinase family.

The protein localises to the cytoplasm. The enzyme catalyses GMP + ATP = GDP + ADP. In terms of biological role, essential for recycling GMP and indirectly, cGMP. The polypeptide is Guanylate kinase (Bartonella henselae (strain ATCC 49882 / DSM 28221 / CCUG 30454 / Houston 1) (Rochalimaea henselae)).